Here is a 583-residue protein sequence, read N- to C-terminus: MANFKVSRVETTPFEGQKPGTSGLRKKVKVFIQPHYLQNFVQATFNALGADRVEGATLVVSGDGRYYSKDAIQIITKMAAANGVRRVWIGQNGLLSTPAVSAVVRERVGADGSKATGAFILTASHNPGGPHEDFGIKYNMENGGPAPEGITNKIYENTTTIKEYLIAEGLPDVDISTTGVSSFEGPKGKFDVDVFDSTSDYLKLLKSIFDFPAIQKLLSSPKFSFCYDALHGVAGVHAKRIFVEELGANESSLVNCVPKEDFGGGHPDPNLTYAKELVARMGLSKTHSEPNPPEFGAAADGDGDRNMVLGKRFFVTPSDSVAIIAANAVQAIPYFSGGLKGVARSMPTSAALDIVAKHLNLKFFEVPTGWKFFGNLMDAGMCSICGEESFGTGSDHIREKDGIWAVLAWLSILAYKNKDNLGEGNLVSVEDIVRQHWAIYGRHYYTRYDYENVNADGAKDLMAHLVKLQSSIDEVNKLIKGIRSDVSNVVHADEFEYKDPVDGSVSKHQGIRYLFEDGSRLVFRLSGTGSEGATIRLYIEQYEKDSSKIGRDSQEALAPLVEVALKLSKMQEYTSRSAPTVIT.

Positions 1-20 are disordered; it reads MANFKVSRVETTPFEGQKPG. Alpha-D-glucose 1,6-bisphosphate is bound by residues Arg25 and Ser124. Ser124 serves as the catalytic Phosphoserine intermediate. Mg(2+)-binding residues include Ser124, Asp300, Asp302, and Asp304. The residue at position 124 (Ser124) is a Phosphoserine. Residues Asp304, Arg305, Thr368, Glu387, Ser389, and Lys400 each coordinate alpha-D-glucose 1,6-bisphosphate.

This sequence belongs to the phosphohexose mutase family. Monomer. Requires Mg(2+) as cofactor.

The protein resides in the cytoplasm. The catalysed reaction is alpha-D-glucose 1-phosphate = alpha-D-glucose 6-phosphate. It catalyses the reaction O-phospho-L-seryl-[protein] + alpha-D-glucose 1-phosphate = alpha-D-glucose 1,6-bisphosphate + L-seryl-[protein]. The enzyme catalyses alpha-D-glucose 1,6-bisphosphate + L-seryl-[protein] = O-phospho-L-seryl-[protein] + alpha-D-glucose 6-phosphate. Catalyzes the reversible isomerization of alpha-D-glucose 1-phosphate to alpha-D-glucose 6-phosphate. The mechanism proceeds via the intermediate compound alpha-D-glucose 1,6-bisphosphate. This enzyme participates in both the breakdown and synthesis of glucose. This chain is Phosphoglucomutase, cytoplasmic (PGM1), found in Solanum tuberosum (Potato).